Consider the following 437-residue polypeptide: Magnetosome protein MamN (437 aa).

The next 11 membrane-spanning stretches (helical) occupy residues 26-46 (LAVLAGAAVLVVIGTISGTYT), 53-73 (SIYFETLALIFGMAAISALLA), 95-115 (WILVMMALVTYGISLASNSLI), 136-156 (VPVIIAEIIAANLGGSSTMIG), 174-194 (FIGGMMPACLILLAVTFLFFE), 229-249 (YGLIIFFITVIGLVLAGPLKV), 252-268 (GWIAFVAGLTALALGRF), 281-301 (DILFFGGLFVMVGALTSVGIL), 320-340 (AILLMWMAAGVTIFVGGGTSA), 358-378 (AAWWALALGIMAGSCAALSGA), and 416-436 (WGLPLMGIFLVLSTVYIAVLA).

The protein belongs to the arsenite-antimonite (ArsB) efflux (TC 2.A.45) family.

The protein localises to the magnetosome membrane. Plays a role in biomineralization; might regulate pH in the magnetosome. The chain is Magnetosome protein MamN from Magnetospirillum gryphiswaldense (strain DSM 6361 / JCM 21280 / NBRC 15271 / MSR-1).